The sequence spans 290 residues: Endoplasmic reticulum-Golgi intermediate compartment protein 1 (290 aa).

The Cytoplasmic portion of the chain corresponds to 1 to 26; it reads MPFDFRRFDIYRKVPKDLTQPTYTGA. Residues 27 to 47 traverse the membrane as a helical segment; it reads IISICCCLFILFLFLSELTGF. Residues 48 to 254 are Lumenal-facing; sequence ITTEVVNELY…RRQPLYRFIT (207 aa). Asn74 carries an N-linked (GlcNAc...) asparagine glycan. A helical transmembrane segment spans residues 255-275; the sequence is TICAIIGGTFTVAGILDSCIF. At 276–290 the chain is on the cytoplasmic side; sequence TASEAWKKIQLGKIH.

This sequence belongs to the ERGIC family. May form a heteromeric complex composed of ERGIC1, ERGIC2 and ERGIC3. Within the complex, the interaction with ERGIC3 is direct. Interacts with ERGIC3/ERV46. N-glycosylated.

It localises to the endoplasmic reticulum membrane. The protein localises to the endoplasmic reticulum-Golgi intermediate compartment membrane. The protein resides in the golgi apparatus membrane. In terms of biological role, possible role in transport between endoplasmic reticulum and Golgi. The protein is Endoplasmic reticulum-Golgi intermediate compartment protein 1 (Ergic1) of Mus musculus (Mouse).